Reading from the N-terminus, the 342-residue chain is MKFLDLCKVYIRSGGGGGGCVSFRREKFIEFGGPDGGDGGNGGSVWAEAVDGLNTLIDFRYQQHFFAKSGQPGMGSQRTGRSGDDIVLKVPVGTEIIDEDEETVIADLTEVGQRVLLAQGGNGGWGNLRFKSSTNRAPARANPGQPGIDRTIWLRLKLIADAGLLGLPNAGKSTFLSATSNARPKIADYPFTTLVPNLGVVGVDGKEFVIADIPGLIEGASEGRGLGDQFLAHVERCSVLLHLVDGTSSTIVKDYRTIIGELEAYGGDLALKPRITAMNKIDAMDSRQISDRRRALEKATGGKVFTISGVAGTGLMDVLRALWAEIDGARGDKVEEHAPWQP.

The region spanning 1–159 (MKFLDLCKVY…RTIWLRLKLI (159 aa)) is the Obg domain. The 168-residue stretch at 160 to 327 (ADAGLLGLPN…VLRALWAEID (168 aa)) folds into the OBG-type G domain. Residues 166 to 173 (GLPNAGKS), 191 to 195 (FTTLV), 212 to 215 (DIPG), 279 to 282 (NKID), and 308 to 310 (SGV) each bind GTP. Positions 173 and 193 each coordinate Mg(2+).

This sequence belongs to the TRAFAC class OBG-HflX-like GTPase superfamily. OBG GTPase family. In terms of assembly, monomer. Mg(2+) serves as cofactor.

The protein resides in the cytoplasm. Its function is as follows. An essential GTPase which binds GTP, GDP and possibly (p)ppGpp with moderate affinity, with high nucleotide exchange rates and a fairly low GTP hydrolysis rate. Plays a role in control of the cell cycle, stress response, ribosome biogenesis and in those bacteria that undergo differentiation, in morphogenesis control. The protein is GTPase Obg of Cereibacter sphaeroides (strain ATCC 17029 / ATH 2.4.9) (Rhodobacter sphaeroides).